Consider the following 85-residue polypeptide: Small ribosomal subunit protein uS17 (85 aa).

The protein belongs to the universal ribosomal protein uS17 family. Part of the 30S ribosomal subunit.

One of the primary rRNA binding proteins, it binds specifically to the 5'-end of 16S ribosomal RNA. The sequence is that of Small ribosomal subunit protein uS17 from Spiroplasma citri.